The primary structure comprises 67 residues: Photosystem II reaction center protein H (67 aa).

A helical transmembrane segment spans residues Gly27–Leu47.

This sequence belongs to the PsbH family. In terms of assembly, PSII is composed of 1 copy each of membrane proteins PsbA, PsbB, PsbC, PsbD, PsbE, PsbF, PsbH, PsbI, PsbJ, PsbK, PsbL, PsbM, PsbT, PsbX, PsbY, Psb30/Ycf12, peripheral proteins PsbO, CyanoQ (PsbQ), PsbU, PsbV and a large number of cofactors. It forms dimeric complexes.

It localises to the cellular thylakoid membrane. Its function is as follows. One of the components of the core complex of photosystem II (PSII), required for its stability and/or assembly. PSII is a light-driven water:plastoquinone oxidoreductase that uses light energy to abstract electrons from H(2)O, generating O(2) and a proton gradient subsequently used for ATP formation. It consists of a core antenna complex that captures photons, and an electron transfer chain that converts photonic excitation into a charge separation. The chain is Photosystem II reaction center protein H from Prochlorococcus marinus (strain MIT 9211).